Consider the following 414-residue polypeptide: MANSC domain-containing protein 1 (414 aa).

Positions 1–24 (MLFRGTSLAYSLLVISFLTPRSSA) are cleaved as a signal peptide. The Extracellular segment spans residues 25–369 (GQNCLTKSLE…HGLSFEKWLL (345 aa)). Positions 32–116 (SLEDVVIDIQ…LKPAKGLVTY (85 aa)) constitute an MANSC domain. Asn-128, Asn-234, and Asn-335 each carry an N-linked (GlcNAc...) asparagine glycan. The segment at 311-339 (FQGGSTLTSDPRHGKSSTSESSITNKTAS) is disordered. Residues 326–338 (SSTSESSITNKTA) show a composition bias toward polar residues. The helical transmembrane segment at 370 to 392 (IGTLLCGVLFLVIGLVLLGRMLV) threads the bilayer. At 393-414 (EALRRKRYSRLDYLINGIYVDI) the chain is on the cytoplasmic side.

The protein resides in the membrane. This is MANSC domain-containing protein 1 (Mansc1) from Mus musculus (Mouse).